The chain runs to 126 residues: Holo-[acyl-carrier-protein] synthase (126 aa).

Positions 9 and 58 each coordinate Mg(2+).

Belongs to the P-Pant transferase superfamily. AcpS family. Homodimer. It depends on Mg(2+) as a cofactor.

The protein resides in the cytoplasm. The enzyme catalyses apo-[ACP] + CoA = holo-[ACP] + adenosine 3',5'-bisphosphate + H(+). In terms of biological role, transfers the 4'-phosphopantetheine moiety from coenzyme A to the 'Ser-36' of acyl-carrier-protein. The polypeptide is Holo-[acyl-carrier-protein] synthase (Escherichia coli O157:H7).